The sequence spans 426 residues: Enolase (426 aa).

Residue glutamine 163 participates in (2R)-2-phosphoglycerate binding. The active-site Proton donor is glutamate 205. Mg(2+) contacts are provided by aspartate 242, glutamate 286, and aspartate 313. (2R)-2-phosphoglycerate contacts are provided by lysine 338, arginine 367, serine 368, and lysine 389. The active-site Proton acceptor is the lysine 338.

The protein belongs to the enolase family. Requires Mg(2+) as cofactor.

The protein localises to the cytoplasm. It is found in the secreted. The protein resides in the cell surface. The enzyme catalyses (2R)-2-phosphoglycerate = phosphoenolpyruvate + H2O. Its pathway is carbohydrate degradation; glycolysis; pyruvate from D-glyceraldehyde 3-phosphate: step 4/5. In terms of biological role, catalyzes the reversible conversion of 2-phosphoglycerate (2-PG) into phosphoenolpyruvate (PEP). It is essential for the degradation of carbohydrates via glycolysis. This Helicobacter pylori (strain P12) protein is Enolase.